We begin with the raw amino-acid sequence, 301 residues long: Polyamine aminopropyltransferase (301 aa).

The region spanning 4-240 (WHWLLEWQTP…GLWGFVYGGV (237 aa)) is the PABS domain. Residue Gln-33 coordinates S-methyl-5'-thioadenosine. The spermidine site is built by His-64 and Glu-89. Residues Asp-109 and 141-142 (DG) each bind S-methyl-5'-thioadenosine. The Proton acceptor role is filled by Asp-159.

This sequence belongs to the spermidine/spermine synthase family. As to quaternary structure, homotrimer.

Its subcellular location is the cytoplasm. It carries out the reaction S-adenosyl 3-(methylsulfanyl)propylamine + putrescine = S-methyl-5'-thioadenosine + spermidine + H(+). The catalysed reaction is S-adenosyl 3-(methylsulfanyl)propylamine + propane-1,3-diamine = norspermidine + S-methyl-5'-thioadenosine + H(+). It catalyses the reaction norspermidine + S-adenosyl 3-(methylsulfanyl)propylamine = norspermine + S-methyl-5'-thioadenosine + H(+). The enzyme catalyses S-adenosyl 3-(methylsulfanyl)propylamine + spermidine = thermospermine + S-methyl-5'-thioadenosine + H(+). Its pathway is amine and polyamine biosynthesis; spermidine biosynthesis; spermidine from putrescine: step 1/1. Competitively inhibited by 5-methylthioadenosine, 5-methylthiotubercidin, S-adenosyl(5)-3-thiopropylamine and S-adenosyl-3-thio-l,8-diaminooctane. Its function is as follows. Involved in the biosynthesis of polyamines which are thought to support the growth of thermophilic microorganisms under high-temperature conditions. It seems that long-chain and branched-chain of polyamines effectively stabilize DNA and RNA, respectively. Catalyzes the irreversible transfer of a propylamine group from the amino donor S-adenosylmethioninamine (decarboxy-AdoMet) to various amine acceptors such as putrescine (1,4-diaminobutane), 1,3-diaminopropane, sym-norspermidine and spermidine. The biosynthesis of caldopentamine from norspermine has been also observed, but with a very low activity. The reaction involves a nucleophilic attack on the C-3 methylene of the propylamine moiety adjacent to the positively charged sulfur of decarboxy-AdoMet. S-adenosylmethioninamine is the only amino donor. The protein is Polyamine aminopropyltransferase of Saccharolobus solfataricus (strain ATCC 35092 / DSM 1617 / JCM 11322 / P2) (Sulfolobus solfataricus).